The chain runs to 428 residues: Phosphomethylpyrimidine synthase 1 (428 aa).

Substrate-binding positions include Met-94, Tyr-123, His-162, 184–186 (SRG), 225–228 (NGMR), and Glu-264. Position 268 (His-268) interacts with Zn(2+). Residue Tyr-291 coordinates substrate. His-332 contributes to the Zn(2+) binding site. [4Fe-4S] cluster-binding residues include Cys-408, Cys-411, and Cys-415.

Belongs to the ThiC family. The cofactor is [4Fe-4S] cluster.

The enzyme catalyses 5-amino-1-(5-phospho-beta-D-ribosyl)imidazole + S-adenosyl-L-methionine = 4-amino-2-methyl-5-(phosphooxymethyl)pyrimidine + CO + 5'-deoxyadenosine + formate + L-methionine + 3 H(+). It participates in cofactor biosynthesis; thiamine diphosphate biosynthesis. Catalyzes the synthesis of the hydroxymethylpyrimidine phosphate (HMP-P) moiety of thiamine from aminoimidazole ribotide (AIR) in a radical S-adenosyl-L-methionine (SAM)-dependent reaction. This is Phosphomethylpyrimidine synthase 1 from Methanosarcina barkeri (strain Fusaro / DSM 804).